The following is a 488-amino-acid chain: Glycogen synthase (488 aa).

An ADP-alpha-D-glucose-binding site is contributed by R20.

It belongs to the glycosyltransferase 1 family. Bacterial/plant glycogen synthase subfamily.

It catalyses the reaction [(1-&gt;4)-alpha-D-glucosyl](n) + ADP-alpha-D-glucose = [(1-&gt;4)-alpha-D-glucosyl](n+1) + ADP + H(+). It participates in glycan biosynthesis; glycogen biosynthesis. Its function is as follows. Synthesizes alpha-1,4-glucan chains using ADP-glucose. The sequence is that of Glycogen synthase from Chlorobaculum tepidum (strain ATCC 49652 / DSM 12025 / NBRC 103806 / TLS) (Chlorobium tepidum).